Here is a 141-residue protein sequence, read N- to C-terminus: Endoribonuclease YbeY (141 aa).

Zn(2+) contacts are provided by His100, His104, and His110.

This sequence belongs to the endoribonuclease YbeY family. Zn(2+) serves as cofactor.

The protein localises to the cytoplasm. Functionally, single strand-specific metallo-endoribonuclease involved in late-stage 70S ribosome quality control and in maturation of the 3' terminus of the 16S rRNA. The polypeptide is Endoribonuclease YbeY (Helicobacter pylori (strain J99 / ATCC 700824) (Campylobacter pylori J99)).